The following is a 257-amino-acid chain: Imidazole glycerol phosphate synthase subunit HisF (257 aa).

Active-site residues include D12 and D131.

The protein belongs to the HisA/HisF family. Heterodimer of HisH and HisF.

The protein resides in the cytoplasm. It carries out the reaction 5-[(5-phospho-1-deoxy-D-ribulos-1-ylimino)methylamino]-1-(5-phospho-beta-D-ribosyl)imidazole-4-carboxamide + L-glutamine = D-erythro-1-(imidazol-4-yl)glycerol 3-phosphate + 5-amino-1-(5-phospho-beta-D-ribosyl)imidazole-4-carboxamide + L-glutamate + H(+). It participates in amino-acid biosynthesis; L-histidine biosynthesis; L-histidine from 5-phospho-alpha-D-ribose 1-diphosphate: step 5/9. Functionally, IGPS catalyzes the conversion of PRFAR and glutamine to IGP, AICAR and glutamate. The HisF subunit catalyzes the cyclization activity that produces IGP and AICAR from PRFAR using the ammonia provided by the HisH subunit. In Mycobacteroides abscessus (strain ATCC 19977 / DSM 44196 / CCUG 20993 / CIP 104536 / JCM 13569 / NCTC 13031 / TMC 1543 / L948) (Mycobacterium abscessus), this protein is Imidazole glycerol phosphate synthase subunit HisF.